Here is an 823-residue protein sequence, read N- to C-terminus: Tax1-binding protein 1 homolog B (823 aa).

The stretch at 149–487 forms a coiled coil; it reads VTTKASYLEQ…QKQVVKFNEQ (339 aa). Disordered regions lie at residues 342-377 and 486-519; these read HRQLLANSSPSGESKALREQLRQKEEQLQATQQQAN and EQQGVKRSPGSDAAAGPLSASPEASAPGSPSTSD. The span at 356 to 368 shows a compositional bias: basic and acidic residues; the sequence is KALREQLRQKEEQ. Residues 498–518 show a composition bias toward low complexity; the sequence is AAAGPLSASPEASAPGSPSTS. The stretch at 548 to 638 forms a coiled coil; the sequence is QMLNEERERC…NREEEQKDSN (91 aa). The disordered stretch occupies residues 650–746; that stretch reads MPYAQDDPSP…EPAAPEPAEF (97 aa). Positions 723–739 are enriched in acidic residues; it reads LEEPEEPQSTQNDDEPA. 2 UBZ1-type zinc fingers span residues 762–788 and 789–815; these read QKRCPLCEVIFPPHYDQSKFEEHVESH and WKICPMCSEQFPLDCDQQLFEKHVLTH. Residues C765, C768, H784, H788, C792, C795, H811, and H815 each contribute to the Zn(2+) site.

As to expression, expressed at relatively high levels in both proximal and distal regions of the fin bud during pectoral fin development.

May have anti-apoptotic activity. The protein is Tax1-binding protein 1 homolog B (tax1bp1b) of Danio rerio (Zebrafish).